The primary structure comprises 483 residues: E3 ubiquitin-protein ligase TRIM50 (483 aa).

The segment at 16-57 (CPICLEVFKEPLMLQCGHSYCKDCLDNLSQHLDSELCCPVCR) adopts an RING-type zinc-finger fold. The B box-type zinc finger occupies 84-125 (IEPTVCVHHRNPLSLFCEKDQEFICGLCGLLGSHQHHRVTPV). Zn(2+) is bound by residues cysteine 89, histidine 92, cysteine 111, and histidine 117. Coiled coils occupy residues 127–169 (TVYS…NESD) and 203–236 (GLVASLDMQLEQAQGTQERLAQAEQVLEQFGNES). Positions 275–474 (DIKLTVWKRL…LPMVLPPPSG (200 aa)) constitute a B30.2/SPRY domain. The residue at position 372 (lysine 372) is an N6-acetyllysine.

This sequence belongs to the TRIM/RBCC family. In terms of assembly, can form dimers and trimers. Interacts with several E2 ubiquitin-conjugating enzymes, including UBE2L6, UBE2E1, UBE2E3. No interaction with UBE2H. Interacts with BECN1. Interacts with SQSTM1. Interacts with NLRP3. Post-translationally, auto-ubiquitinated. Acetylated by EP300 and KAT2B. HDAC6 drives TRIM50 deacetylation. Acetylation antagonizes with TRIM50 ubiquitination. As to expression, expressed in the stomach.

It localises to the cytoplasm. The catalysed reaction is S-ubiquitinyl-[E2 ubiquitin-conjugating enzyme]-L-cysteine + [acceptor protein]-L-lysine = [E2 ubiquitin-conjugating enzyme]-L-cysteine + N(6)-ubiquitinyl-[acceptor protein]-L-lysine.. In terms of biological role, E3 ubiquitin-protein ligase that ubiquitinates Beclin-1/BECN1 in a 'Lys-63'-dependent manner enhancing its binding to ULK1. In turn, promotes starvation-induced autophagy activation. Also interacts with p62/SQSTM1 protein and thereby induces the formation and the autophagy clearance of aggresome-associated polyubiquitinated proteins through HDAC6 interaction. Also promotes NLRP3 inflammasome activation by directly inducing NLRP3 oligomerization independent of its E3 ligase function. In Mus musculus (Mouse), this protein is E3 ubiquitin-protein ligase TRIM50 (Trim50).